A 168-amino-acid chain; its full sequence is Pheromone-binding protein (168 aa).

Residues 1-26 form the signal peptide; that stretch reads MNKTTTKMKVAVVAIVVYLAVGNVDS. Disulfide bonds link Cys45–Cys80, Cys76–Cys134, and Cys123–Cys143.

This sequence belongs to the PBP/GOBP family. Homodimer. Antenna.

Functionally, this major soluble protein in olfactory sensilla of male moths might serve to solubilize the extremely hydrophobic pheromone molecules and to transport pheromone through the aqueous lymph to receptors located on olfactory cilia. PBP is also found in sensilla from female M.sexta antennae. This Manduca sexta (Tobacco hawkmoth) protein is Pheromone-binding protein.